The sequence spans 187 residues: MNWRALFKPSAKYSILALLVVGIVIGVVGYFATQQTLHATSTDAFCMSCHSNHSLKNEVLASAHGGGKAGVTVQCQDCHLPHGPVDYLIKKIIVSKDLYGFLTIDGFNTQAWLDENRKEQADKALAYFRGNDSANCQHCHTRIYENQPETMKPMAVRMHTNNFKKDPETRKTCVDCHKGVAHPYPKG.

Over 1-12 (MNWRALFKPSAK) the chain is Cytoplasmic. The helical transmembrane segment at 13-33 (YSILALLVVGIVIGVVGYFAT) threads the bilayer. The Periplasmic portion of the chain corresponds to 34–187 (QQTLHATSTD…KGVAHPYPKG (154 aa)). Residues C46, C49, H64, C75, C78, H79, D97, C136, C139, H140, C173, C176, H177, and H182 each coordinate heme c.

Belongs to the NapC/NirT/NrfH family. Homodimer. Heme c is required as a cofactor.

It localises to the cell inner membrane. It carries out the reaction a quinol + 2 Fe(III)-[cytochrome c](out) = a quinone + 2 Fe(II)-[cytochrome c](out) + 2 H(+)(out). Its activity is regulated as follows. Spectroscopic studies suggest that CymA requires a non-heme cofactor for quinol oxidation. Functionally, quinol dehydrogenase involved in several anaerobic electron transfer pathways. Acquires electrons from the membrane quinone pool and mediates their transfer to several periplasmic terminal reductases and redox shuttles, including the fumarate reductase FccA, the small tetraheme cytochrome (STC), the c-type cytochrome MtrA, the nitrate reductase NapA (either through NapB or directly), the nitrite reductase NrfA and probably also the DmsE subunit of dimethyl sulfoxide (DMSO) reductase. Required for growth on fumarate and on DMSO, and for the reduction of iron(III), manganese(IV), nitrite and nitrate. Not essential for growth on trimethylamine-N-oxide (TMAO). The sequence is that of Tetraheme c-type cytochrome CymA from Shewanella oneidensis (strain ATCC 700550 / JCM 31522 / CIP 106686 / LMG 19005 / NCIMB 14063 / MR-1).